The chain runs to 129 residues: Small ribosomal subunit protein uS11 (129 aa).

The protein belongs to the universal ribosomal protein uS11 family. Part of the 30S ribosomal subunit. Interacts with proteins S7 and S18. Binds to IF-3.

Functionally, located on the platform of the 30S subunit, it bridges several disparate RNA helices of the 16S rRNA. Forms part of the Shine-Dalgarno cleft in the 70S ribosome. The polypeptide is Small ribosomal subunit protein uS11 (Novosphingobium aromaticivorans (strain ATCC 700278 / DSM 12444 / CCUG 56034 / CIP 105152 / NBRC 16084 / F199)).